The following is a 213-amino-acid chain: ATP-dependent Clp protease proteolytic subunit (213 aa).

Catalysis depends on S114, which acts as the Nucleophile. H139 is a catalytic residue.

This sequence belongs to the peptidase S14 family. As to quaternary structure, fourteen ClpP subunits assemble into 2 heptameric rings which stack back to back to give a disk-like structure with a central cavity, resembling the structure of eukaryotic proteasomes.

It is found in the cytoplasm. It catalyses the reaction Hydrolysis of proteins to small peptides in the presence of ATP and magnesium. alpha-casein is the usual test substrate. In the absence of ATP, only oligopeptides shorter than five residues are hydrolyzed (such as succinyl-Leu-Tyr-|-NHMec, and Leu-Tyr-Leu-|-Tyr-Trp, in which cleavage of the -Tyr-|-Leu- and -Tyr-|-Trp bonds also occurs).. Cleaves peptides in various proteins in a process that requires ATP hydrolysis. Has a chymotrypsin-like activity. Plays a major role in the degradation of misfolded proteins. The sequence is that of ATP-dependent Clp protease proteolytic subunit from Pseudomonas syringae pv. syringae (strain B728a).